The chain runs to 1201 residues: DNA-directed RNA polymerase subunit beta' (1201 aa).

Zn(2+)-binding residues include Cys60, Cys62, Cys75, and Cys78. Mg(2+)-binding residues include Asp449, Asp451, and Asp453. Cys818, Cys892, Cys899, and Cys902 together coordinate Zn(2+).

This sequence belongs to the RNA polymerase beta' chain family. The RNAP catalytic core consists of 2 alpha, 1 beta, 1 beta' and 1 omega subunit. When a sigma factor is associated with the core the holoenzyme is formed, which can initiate transcription. Requires Mg(2+) as cofactor. It depends on Zn(2+) as a cofactor.

It carries out the reaction RNA(n) + a ribonucleoside 5'-triphosphate = RNA(n+1) + diphosphate. DNA-dependent RNA polymerase catalyzes the transcription of DNA into RNA using the four ribonucleoside triphosphates as substrates. This chain is DNA-directed RNA polymerase subunit beta', found in Listeria innocua serovar 6a (strain ATCC BAA-680 / CLIP 11262).